The primary structure comprises 133 residues: Small ribosomal subunit protein uS11 (133 aa).

The disordered stretch occupies residues 1–23 (MPPKTRGAVRKPRKKDKKNIALG). Residues 7 to 17 (GAVRKPRKKDK) show a composition bias toward basic residues.

The protein belongs to the universal ribosomal protein uS11 family. As to quaternary structure, part of the 30S ribosomal subunit. Interacts with proteins S7 and S18. Binds to IF-3.

Located on the platform of the 30S subunit, it bridges several disparate RNA helices of the 16S rRNA. Forms part of the Shine-Dalgarno cleft in the 70S ribosome. The chain is Small ribosomal subunit protein uS11 from Pseudarthrobacter chlorophenolicus (strain ATCC 700700 / DSM 12829 / CIP 107037 / JCM 12360 / KCTC 9906 / NCIMB 13794 / A6) (Arthrobacter chlorophenolicus).